The chain runs to 418 residues: Glutamyl-tRNA reductase (418 aa).

Substrate is bound by residues 49–52, serine 109, 114–116, and glutamine 120; these read TCNR and EPQ. Cysteine 50 (nucleophile) is an active-site residue. 189-194 lines the NADP(+) pocket; sequence GAGETI.

This sequence belongs to the glutamyl-tRNA reductase family. Homodimer.

It catalyses the reaction (S)-4-amino-5-oxopentanoate + tRNA(Glu) + NADP(+) = L-glutamyl-tRNA(Glu) + NADPH + H(+). Its pathway is porphyrin-containing compound metabolism; protoporphyrin-IX biosynthesis; 5-aminolevulinate from L-glutamyl-tRNA(Glu): step 1/2. In terms of biological role, catalyzes the NADPH-dependent reduction of glutamyl-tRNA(Glu) to glutamate 1-semialdehyde (GSA). In Erwinia tasmaniensis (strain DSM 17950 / CFBP 7177 / CIP 109463 / NCPPB 4357 / Et1/99), this protein is Glutamyl-tRNA reductase.